The sequence spans 383 residues: Pheromone-regulated membrane protein 10 (383 aa).

Residues 1 to 65 are Cytoplasmic-facing; it reads MIVSFGDATT…ILADTNLYPP (65 aa). Residues 66–86 form a helical membrane-spanning segment; sequence WMCVLLYAFCSAMVTPYAFGG. Asp87 is a topological domain (extracellular). The chain crosses the membrane as a helical span at residues 88-108; it reads WVNLAISFFMGLCVGSLQFIL. Over 109 to 117 the chain is Cytoplasmic; the sequence is SQKSYMYSN. A helical transmembrane segment spans residues 118–138; that stretch reads VFEISASIVVSFCGRAFGSIP. Residues 139–141 are Extracellular-facing; the sequence is RSH. Residues 142–162 traverse the membrane as a helical segment; that stretch reads ICFGAVTQGSLALILPGYIIL. Residues 163–180 lie on the Cytoplasmic side of the membrane; it reads CGALELQSRSLVAGAVRM. The chain crosses the membrane as a helical span at residues 181 to 201; it reads FYAIIYSLFLGFGITLGSALF. At 202–216 the chain is on the extracellular side; the sequence is GWMYHNATNEISCPQ. A helical membrane pass occupies residues 217–237; it reads LISPWFRFLFVPAFTISISLL. The Cytoplasmic segment spans residues 238–241; the sequence is NQAH. Residues 242 to 262 form a helical membrane-spanning segment; the sequence is ISQLPVMVFISCTGYVVTYWA. At 263–271 the chain is on the extracellular side; that stretch reads GKHFANSTE. The helical transmembrane segment at 272–292 threads the bilayer; the sequence is FTAALAAFVIGVLGNLYSRIW. A topological domain (cytoplasmic) is located at residue Lys293. A helical transmembrane segment spans residues 294–314; that stretch reads GLAVSAMLPAIFVQVPSGIAS. The Extracellular segment spans residues 315–352; sequence QNSLLSGLQSANTIVNANETITTSTSDPSSSMSFGMTM. A helical membrane pass occupies residues 353–373; it reads IQVCVGISVGLFASSLFVYPF. The Cytoplasmic segment spans residues 374–383; it reads GKKKTGLFSL.

It belongs to the ThrE exporter (TC 2.A.79) family.

Its subcellular location is the membrane. The protein is Pheromone-regulated membrane protein 10 (PRM10) of Saccharomyces cerevisiae (strain ATCC 204508 / S288c) (Baker's yeast).